The following is a 117-amino-acid chain: Large ribosomal subunit protein bL20 (117 aa).

The protein belongs to the bacterial ribosomal protein bL20 family.

Functionally, binds directly to 23S ribosomal RNA and is necessary for the in vitro assembly process of the 50S ribosomal subunit. It is not involved in the protein synthesizing functions of that subunit. The chain is Large ribosomal subunit protein bL20 from Ruminiclostridium cellulolyticum (strain ATCC 35319 / DSM 5812 / JCM 6584 / H10) (Clostridium cellulolyticum).